The following is an 876-amino-acid chain: Alanine--tRNA ligase (876 aa).

K74 carries the N6-acetyllysine modification. The Zn(2+) site is built by H564, H568, C666, and H670.

It belongs to the class-II aminoacyl-tRNA synthetase family. Homotetramer. Zn(2+) is required as a cofactor.

Its subcellular location is the cytoplasm. The enzyme catalyses tRNA(Ala) + L-alanine + ATP = L-alanyl-tRNA(Ala) + AMP + diphosphate. Its function is as follows. Catalyzes the attachment of alanine to tRNA(Ala) in a two-step reaction: alanine is first activated by ATP to form Ala-AMP and then transferred to the acceptor end of tRNA(Ala). Also edits incorrectly charged Ser-tRNA(Ala) and Gly-tRNA(Ala) via its editing domain. This chain is Alanine--tRNA ligase, found in Shigella boydii serotype 4 (strain Sb227).